The chain runs to 716 residues: Fatty acid oxidation complex subunit alpha (716 aa).

The segment at 1 to 189 (MIYQSPTIQV…KVGAVDAVVA (189 aa)) is enoyl-CoA hydratase/isomerase. Residue D296 coordinates substrate. The 3-hydroxyacyl-CoA dehydrogenase stretch occupies residues 311-716 (KEVNNAAVLG…AANNGSYYQA (406 aa)). NAD(+)-binding positions include M324, D343, 400 to 402 (VVE), K407, and S429. Residue H450 is the For 3-hydroxyacyl-CoA dehydrogenase activity of the active site. N453 serves as a coordination point for NAD(+). 2 residues coordinate substrate: N500 and Y660.

It in the N-terminal section; belongs to the enoyl-CoA hydratase/isomerase family. In the C-terminal section; belongs to the 3-hydroxyacyl-CoA dehydrogenase family. As to quaternary structure, heterotetramer of two alpha chains (FadB) and two beta chains (FadA).

The enzyme catalyses a (3S)-3-hydroxyacyl-CoA + NAD(+) = a 3-oxoacyl-CoA + NADH + H(+). It catalyses the reaction a (3S)-3-hydroxyacyl-CoA = a (2E)-enoyl-CoA + H2O. The catalysed reaction is a 4-saturated-(3S)-3-hydroxyacyl-CoA = a (3E)-enoyl-CoA + H2O. It carries out the reaction (3S)-3-hydroxybutanoyl-CoA = (3R)-3-hydroxybutanoyl-CoA. The enzyme catalyses a (3Z)-enoyl-CoA = a 4-saturated (2E)-enoyl-CoA. It catalyses the reaction a (3E)-enoyl-CoA = a 4-saturated (2E)-enoyl-CoA. It participates in lipid metabolism; fatty acid beta-oxidation. Its function is as follows. Involved in the aerobic and anaerobic degradation of long-chain fatty acids via beta-oxidation cycle. Catalyzes the formation of 3-oxoacyl-CoA from enoyl-CoA via L-3-hydroxyacyl-CoA. It can also use D-3-hydroxyacyl-CoA and cis-3-enoyl-CoA as substrate. This chain is Fatty acid oxidation complex subunit alpha, found in Shewanella baltica (strain OS223).